Consider the following 1006-residue polypeptide: D-2-hydroxyglutarate dehydrogenase (1006 aa).

An FAD-binding PCMH-type domain is found at 47-279 (YQRLPQAAVF…VEAKLNVLPI (233 aa)). Positions 397 and 495 each coordinate (R)-2-hydroxyglutarate. A 4Fe-4S ferredoxin-type domain is found at 655-687 (SHEVYDAMAGCLACKSCAGQCPIKVNVPDFRSR). Positions 665, 668, 671, and 675 each coordinate [4Fe-4S] cluster.

It in the N-terminal section; belongs to the FAD-binding oxidoreductase/transferase type 4 family. It depends on [4Fe-4S] cluster as a cofactor. FAD serves as cofactor.

It catalyses the reaction (R)-2-hydroxyglutarate + A = 2-oxoglutarate + AH2. The protein operates within amino-acid degradation. Catalyzes the oxidation of D-2-hydroxyglutarate (D-2-HGA) to 2-oxoglutarate. Is involved in a D-lysine catabolic pathway. This Pseudomonas putida (strain ATCC 47054 / DSM 6125 / CFBP 8728 / NCIMB 11950 / KT2440) protein is D-2-hydroxyglutarate dehydrogenase.